A 224-amino-acid chain; its full sequence is UPF0111 protein CPn_0681/CP_0066/CPj0681/CpB0708 (224 aa).

This sequence belongs to the UPF0111 family.

This chain is UPF0111 protein CPn_0681/CP_0066/CPj0681/CpB0708, found in Chlamydia pneumoniae (Chlamydophila pneumoniae).